The sequence spans 75 residues: Putative antitoxin VapB17 (75 aa).

Functionally, putative antitoxin component of a possible type II toxin-antitoxin (TA) system. The cognate toxin is VapC17. The polypeptide is Putative antitoxin VapB17 (vapB17) (Mycobacterium tuberculosis (strain CDC 1551 / Oshkosh)).